The following is an 819-amino-acid chain: Serine/threonine-protein phosphatase 1 regulatory subunit 10 (819 aa).

The 75-residue stretch at lysine 73–glutamine 147 folds into the TFIIS N-terminal domain. 3 disordered regions span residues glutamine 151–serine 204, lysine 296–valine 391, and serine 495–methionine 785. 2 stretches are compositionally biased toward basic and acidic residues: residues alanine 153 to lysine 165 and lysine 173 to lysine 190. The span at serine 305–lysine 327 shows a compositional bias: polar residues. A PP1-binding motif motif is present at residues lysine 386–valine 415. The span at serine 495 to aspartate 504 shows a compositional bias: basic and acidic residues. 2 stretches are compositionally biased toward polar residues: residues methionine 533–aspartate 543 and methionine 560–leucine 578. Residues lysine 589 to lysine 604 show a composition bias toward basic and acidic residues. The span at leucine 606–glycine 618 shows a compositional bias: low complexity. 2 stretches are compositionally biased toward pro residues: residues phenylalanine 635–asparagine 663 and histidine 670–asparagine 695. Composition is skewed to basic and acidic residues over residues histidine 704–aspartate 715 and histidine 758–arginine 777. The C3H1-type zinc-finger motif lies at methionine 785–isoleucine 813.

Component of the PNUTS-PP1 complex (also named PTW/PP1 complex).

Its subcellular location is the nucleus. The protein localises to the chromosome. Functionally, substrate-recognition component of the PNUTS-PP1 protein phosphatase complex, a protein phosphatase 1 (PP1) complex that promotes RNA polymerase II transcription pause-release, allowing transcription elongation. Promoter-proximal pausing by RNA polymerase II is a transcription halt following transcription initiation but prior to elongation, which acts as a checkpoint to control that transcripts are favorably configured for transcriptional elongation. The PNUTS-PP1 complex mediates the release of RNA polymerase II from promoter-proximal region of genes by catalyzing dephosphorylation of proteins involved in transcription. In some context, PPP1R10/PNUTS also acts as an inhibitor of protein phosphatase 1 (PP1) activity by preventing access to substrates. The protein is Serine/threonine-protein phosphatase 1 regulatory subunit 10 (ppp1r10) of Xenopus laevis (African clawed frog).